Reading from the N-terminus, the 503-residue chain is Lithocholate 6-beta-hydroxylase (503 aa).

Cys442 lines the heme pocket.

The protein belongs to the cytochrome P450 family. It depends on heme as a cofactor.

The protein localises to the endoplasmic reticulum membrane. The protein resides in the microsome membrane. The enzyme catalyses lithocholate + reduced [NADPH--hemoprotein reductase] + O2 = 6beta-hydroxylithocholate + oxidized [NADPH--hemoprotein reductase] + H2O + H(+). In terms of biological role, catalyzes the 6 beta-hydroxylation of lithocholic acid and steroid hormones. This Mesocricetus auratus (Golden hamster) protein is Lithocholate 6-beta-hydroxylase (CYP3A10).